A 345-amino-acid chain; its full sequence is S-adenosylmethionine:tRNA ribosyltransferase-isomerase (345 aa).

It belongs to the QueA family. In terms of assembly, monomer.

The protein localises to the cytoplasm. The catalysed reaction is 7-aminomethyl-7-carbaguanosine(34) in tRNA + S-adenosyl-L-methionine = epoxyqueuosine(34) in tRNA + adenine + L-methionine + 2 H(+). Its pathway is tRNA modification; tRNA-queuosine biosynthesis. Its function is as follows. Transfers and isomerizes the ribose moiety from AdoMet to the 7-aminomethyl group of 7-deazaguanine (preQ1-tRNA) to give epoxyqueuosine (oQ-tRNA). This is S-adenosylmethionine:tRNA ribosyltransferase-isomerase from Helicobacter pylori (strain HPAG1).